The chain runs to 474 residues: tRNA-2-methylthio-N(6)-dimethylallyladenosine synthase (474 aa).

The region spanning 3–120 (KKLHIKTWGC…LPEMINSVRG (118 aa)) is the MTTase N-terminal domain. The [4Fe-4S] cluster site is built by Cys-12, Cys-49, Cys-83, Cys-157, Cys-161, and Cys-164. Positions 143 to 375 (RAEGPTAFVS…QERINQQAMA (233 aa)) constitute a Radical SAM core domain. Residues 378–441 (RRMLGTTQRI…PNSLRGKVVR (64 aa)) enclose the TRAM domain.

Belongs to the methylthiotransferase family. MiaB subfamily. Monomer. [4Fe-4S] cluster serves as cofactor.

Its subcellular location is the cytoplasm. It catalyses the reaction N(6)-dimethylallyladenosine(37) in tRNA + (sulfur carrier)-SH + AH2 + 2 S-adenosyl-L-methionine = 2-methylsulfanyl-N(6)-dimethylallyladenosine(37) in tRNA + (sulfur carrier)-H + 5'-deoxyadenosine + L-methionine + A + S-adenosyl-L-homocysteine + 2 H(+). Functionally, catalyzes the methylthiolation of N6-(dimethylallyl)adenosine (i(6)A), leading to the formation of 2-methylthio-N6-(dimethylallyl)adenosine (ms(2)i(6)A) at position 37 in tRNAs that read codons beginning with uridine. In Salmonella paratyphi A (strain ATCC 9150 / SARB42), this protein is tRNA-2-methylthio-N(6)-dimethylallyladenosine synthase.